The following is a 440-amino-acid chain: Probable aldose 1-epimerase ARB_05372 (440 aa).

An N-terminal signal peptide occupies residues 1 to 24 (MCGVLRQLMLLLLAFLSITPSCSA). Asn32, Asn38, Asn43, Asn68, and Asn112 each carry an N-linked (GlcNAc...) asparagine glycan. A substrate-binding site is contributed by 125-126 (NR). Residues Asn129, Asn147, Asn163, Asn171, and Asn199 are each glycosylated (N-linked (GlcNAc...) asparagine). The active-site Proton donor is the His233. Residues Asn243, Asn275, Asn281, and Asn306 are each glycosylated (N-linked (GlcNAc...) asparagine). A substrate-binding site is contributed by Asp311. Residues Asn321, Asn337, Asn365, and Asn385 are each glycosylated (N-linked (GlcNAc...) asparagine). Glu401 (proton acceptor) is an active-site residue.

The protein belongs to the aldose epimerase family. Monomer.

It localises to the secreted. It carries out the reaction alpha-D-glucose = beta-D-glucose. The protein operates within carbohydrate metabolism; hexose metabolism. Its function is as follows. Mutarotase converts alpha-aldose to the beta-anomer. It is active on D-glucose, L-arabinose, D-xylose, D-galactose, maltose and lactose. In Arthroderma benhamiae (strain ATCC MYA-4681 / CBS 112371) (Trichophyton mentagrophytes), this protein is Probable aldose 1-epimerase ARB_05372.